Here is a 298-residue protein sequence, read N- to C-terminus: Probable pyridoxal 5'-phosphate synthase subunit SNZ2 (298 aa).

Residue D21 coordinates D-ribose 5-phosphate. Residue K78 is the Schiff-base intermediate with D-ribose 5-phosphate of the active site. Residues G150, G213, and 234 to 235 contribute to the D-ribose 5-phosphate site; that span reads GS.

Belongs to the PdxS/SNZ family. In terms of assembly, homohexamer. Interacts with THI11.

It carries out the reaction aldehydo-D-ribose 5-phosphate + D-glyceraldehyde 3-phosphate + L-glutamine = pyridoxal 5'-phosphate + L-glutamate + phosphate + 3 H2O + H(+). It participates in cofactor biosynthesis; pyridoxal 5'-phosphate biosynthesis. Catalyzes the formation of pyridoxal 5'-phosphate from ribose 5-phosphate (RBP), glyceraldehyde 3-phosphate (G3P) and ammonia. The ammonia is provided by a SNO isoform. Can also use ribulose 5-phosphate and dihydroxyacetone phosphate as substrates, resulting from enzyme-catalyzed isomerization of RBP and G3P, respectively. This Saccharomyces cerevisiae (strain ATCC 204508 / S288c) (Baker's yeast) protein is Probable pyridoxal 5'-phosphate synthase subunit SNZ2 (SNZ2).